Reading from the N-terminus, the 490-residue chain is Protein U94 (490 aa).

The 210-residue stretch at methionine 1 to lysine 210 folds into the PV NS1-Nuc domain.

The protein localises to the host nucleus. This chain is Protein U94 (U94), found in Human herpesvirus 6A (strain Uganda-1102) (HHV-6 variant A).